We begin with the raw amino-acid sequence, 397 residues long: Ribosomal RNA large subunit methyltransferase I (397 aa).

The 78-residue stretch at 2-79 (TAAIYLVKGR…KEEINKAFFV (78 aa)) folds into the PUA domain.

This sequence belongs to the methyltransferase superfamily. RlmI family.

It is found in the cytoplasm. It catalyses the reaction cytidine(1962) in 23S rRNA + S-adenosyl-L-methionine = 5-methylcytidine(1962) in 23S rRNA + S-adenosyl-L-homocysteine + H(+). Specifically methylates the cytosine at position 1962 (m5C1962) of 23S rRNA. The protein is Ribosomal RNA large subunit methyltransferase I of Vibrio parahaemolyticus serotype O3:K6 (strain RIMD 2210633).